The following is a 180-amino-acid chain: Large ribosomal subunit protein uL5 (180 aa).

This sequence belongs to the universal ribosomal protein uL5 family. In terms of assembly, part of the 50S ribosomal subunit; part of the 5S rRNA/L5/L18/L25 subcomplex. Contacts the 5S rRNA and the P site tRNA. Forms a bridge to the 30S subunit in the 70S ribosome.

This is one of the proteins that bind and probably mediate the attachment of the 5S RNA into the large ribosomal subunit, where it forms part of the central protuberance. In the 70S ribosome it contacts protein S13 of the 30S subunit (bridge B1b), connecting the 2 subunits; this bridge is implicated in subunit movement. Contacts the P site tRNA; the 5S rRNA and some of its associated proteins might help stabilize positioning of ribosome-bound tRNAs. This is Large ribosomal subunit protein uL5 from Xanthomonas euvesicatoria pv. vesicatoria (strain 85-10) (Xanthomonas campestris pv. vesicatoria).